Reading from the N-terminus, the 597-residue chain is Arginine--tRNA ligase (597 aa).

The 'HIGH' region signature appears at 125–135; the sequence is PNTNKPLHLGH.

It belongs to the class-I aminoacyl-tRNA synthetase family. As to quaternary structure, monomer.

The protein resides in the cytoplasm. The enzyme catalyses tRNA(Arg) + L-arginine + ATP = L-arginyl-tRNA(Arg) + AMP + diphosphate. This Bacteroides fragilis (strain YCH46) protein is Arginine--tRNA ligase.